The primary structure comprises 289 residues: 4-hydroxy-3-methylbut-2-enyl diphosphate reductase (289 aa).

Cysteine 13 lines the [4Fe-4S] cluster pocket. (2E)-4-hydroxy-3-methylbut-2-enyl diphosphate-binding residues include histidine 41 and histidine 75. The dimethylallyl diphosphate site is built by histidine 41 and histidine 75. Positions 41 and 75 each coordinate isopentenyl diphosphate. Residue cysteine 97 participates in [4Fe-4S] cluster binding. Position 129 (histidine 129) interacts with (2E)-4-hydroxy-3-methylbut-2-enyl diphosphate. Histidine 129 contributes to the dimethylallyl diphosphate binding site. Isopentenyl diphosphate is bound at residue histidine 129. The active-site Proton donor is the glutamate 131. Residue threonine 167 participates in (2E)-4-hydroxy-3-methylbut-2-enyl diphosphate binding. Position 198 (cysteine 198) interacts with [4Fe-4S] cluster. Residues serine 226, serine 227, asparagine 228, and serine 270 each contribute to the (2E)-4-hydroxy-3-methylbut-2-enyl diphosphate site. 4 residues coordinate dimethylallyl diphosphate: serine 226, serine 227, asparagine 228, and serine 270. Positions 226, 227, 228, and 270 each coordinate isopentenyl diphosphate.

It belongs to the IspH family. Requires [4Fe-4S] cluster as cofactor.

The enzyme catalyses isopentenyl diphosphate + 2 oxidized [2Fe-2S]-[ferredoxin] + H2O = (2E)-4-hydroxy-3-methylbut-2-enyl diphosphate + 2 reduced [2Fe-2S]-[ferredoxin] + 2 H(+). It carries out the reaction dimethylallyl diphosphate + 2 oxidized [2Fe-2S]-[ferredoxin] + H2O = (2E)-4-hydroxy-3-methylbut-2-enyl diphosphate + 2 reduced [2Fe-2S]-[ferredoxin] + 2 H(+). Its pathway is isoprenoid biosynthesis; dimethylallyl diphosphate biosynthesis; dimethylallyl diphosphate from (2E)-4-hydroxy-3-methylbutenyl diphosphate: step 1/1. The protein operates within isoprenoid biosynthesis; isopentenyl diphosphate biosynthesis via DXP pathway; isopentenyl diphosphate from 1-deoxy-D-xylulose 5-phosphate: step 6/6. Its function is as follows. Catalyzes the conversion of 1-hydroxy-2-methyl-2-(E)-butenyl 4-diphosphate (HMBPP) into a mixture of isopentenyl diphosphate (IPP) and dimethylallyl diphosphate (DMAPP). Acts in the terminal step of the DOXP/MEP pathway for isoprenoid precursor biosynthesis. The chain is 4-hydroxy-3-methylbut-2-enyl diphosphate reductase from Bacteroides thetaiotaomicron (strain ATCC 29148 / DSM 2079 / JCM 5827 / CCUG 10774 / NCTC 10582 / VPI-5482 / E50).